The sequence spans 1197 residues: uncharacterized protein (1197 aa).

This is an uncharacterized protein from Sinorhizobium fredii (strain NBRC 101917 / NGR234).